Reading from the N-terminus, the 293-residue chain is Signal recognition particle receptor FtsY (293 aa).

GTP-binding positions include 93 to 100 (GVNGAGKT), 175 to 179 (DTAGR), and 239 to 242 (TKLD).

Belongs to the GTP-binding SRP family. FtsY subfamily. In terms of assembly, part of the signal recognition particle protein translocation system, which is composed of SRP and FtsY. SRP is a ribonucleoprotein composed of Ffh and a 4.5S RNA molecule.

Its subcellular location is the cell inner membrane. The protein resides in the cytoplasm. The enzyme catalyses GTP + H2O = GDP + phosphate + H(+). Functionally, involved in targeting and insertion of nascent membrane proteins into the cytoplasmic membrane. Acts as a receptor for the complex formed by the signal recognition particle (SRP) and the ribosome-nascent chain (RNC). Interaction with SRP-RNC leads to the transfer of the RNC complex to the Sec translocase for insertion into the membrane, the hydrolysis of GTP by both Ffh and FtsY, and the dissociation of the SRP-FtsY complex into the individual components. The chain is Signal recognition particle receptor FtsY from Helicobacter pylori (strain J99 / ATCC 700824) (Campylobacter pylori J99).